The chain runs to 509 residues: 2-isopropylmalate synthase (509 aa).

A Pyruvate carboxyltransferase domain is found at Val-4–Tyr-266. Mn(2+) contacts are provided by Asp-13, His-201, His-203, and Asn-237. The interval Thr-390 to Gln-509 is regulatory domain.

Belongs to the alpha-IPM synthase/homocitrate synthase family. LeuA type 1 subfamily. As to quaternary structure, homodimer. Mn(2+) serves as cofactor.

It localises to the cytoplasm. The enzyme catalyses 3-methyl-2-oxobutanoate + acetyl-CoA + H2O = (2S)-2-isopropylmalate + CoA + H(+). It functions in the pathway amino-acid biosynthesis; L-leucine biosynthesis; L-leucine from 3-methyl-2-oxobutanoate: step 1/4. In terms of biological role, catalyzes the condensation of the acetyl group of acetyl-CoA with 3-methyl-2-oxobutanoate (2-ketoisovalerate) to form 3-carboxy-3-hydroxy-4-methylpentanoate (2-isopropylmalate). This is 2-isopropylmalate synthase from Carboxydothermus hydrogenoformans (strain ATCC BAA-161 / DSM 6008 / Z-2901).